The sequence spans 335 residues: Cathepsin B (335 aa).

Residues 1 to 17 (MWRLLATLSCLLVLTSA) form the signal peptide. The propeptide at 18 to 79 (RSSLYFPPLS…QRDAFAADVV (62 aa)) is activation peptide. 6 disulfides stabilise this stretch: cysteine 93–cysteine 122, cysteine 105–cysteine 150, cysteine 141–cysteine 207, cysteine 142–cysteine 146, cysteine 179–cysteine 211, and cysteine 187–cysteine 198. Cysteine 108 is an active-site residue. N-linked (GlcNAc...) asparagine glycosylation is present at asparagine 192. Lysine 220 carries the post-translational modification N6-acetyllysine. The cysteines at positions 227 and 331 are disulfide-linked. Residues histidine 278 and asparagine 298 contribute to the active site. The propeptide occupies 333–335 (HQY).

Belongs to the peptidase C1 family. Dimer of a heavy chain and a light chain cross-linked by a disulfide bond. Interacts with SRPX2. Directly interacts with SHKBP1. In terms of tissue distribution, expressed in myoblasts, the myotube, fibroblasts and fetal muscle (at protein level). Expressed in the spleen (at protein level).

The protein localises to the lysosome. The protein resides in the melanosome. It is found in the secreted. It localises to the extracellular space. Its subcellular location is the apical cell membrane. The enzyme catalyses Hydrolysis of proteins with broad specificity for peptide bonds. Preferentially cleaves -Arg-Arg-|-Xaa bonds in small molecule substrates (thus differing from cathepsin L). In addition to being an endopeptidase, shows peptidyl-dipeptidase activity, liberating C-terminal dipeptides.. Functionally, thiol protease which is believed to participate in intracellular degradation and turnover of proteins. Cleaves matrix extracellular phosphoglycoprotein MEPE. Involved in the solubilization of cross-linked TG/thyroglobulin in the thyroid follicle lumen. Has also been implicated in tumor invasion and metastasis. The polypeptide is Cathepsin B (CTSB) (Bos taurus (Bovine)).